The following is a 376-amino-acid chain: Tetraacyldisaccharide 4'-kinase (376 aa).

51 to 58 is a binding site for ATP; it reads AVGGTGKT.

This sequence belongs to the LpxK family.

The enzyme catalyses a lipid A disaccharide + ATP = a lipid IVA + ADP + H(+). The protein operates within glycolipid biosynthesis; lipid IV(A) biosynthesis; lipid IV(A) from (3R)-3-hydroxytetradecanoyl-[acyl-carrier-protein] and UDP-N-acetyl-alpha-D-glucosamine: step 6/6. Transfers the gamma-phosphate of ATP to the 4'-position of a tetraacyldisaccharide 1-phosphate intermediate (termed DS-1-P) to form tetraacyldisaccharide 1,4'-bis-phosphate (lipid IVA). This Bacteroides fragilis (strain YCH46) protein is Tetraacyldisaccharide 4'-kinase.